The sequence spans 414 residues: Cytochrome P450 CYP105Q4 (414 aa).

Polar residues predominate over residues 1-12 (MSDTLASPSPET). The tract at residues 1–21 (MSDTLASPSPETASGIPDYPM) is disordered. 5 residues coordinate heme: H108, Q302, R304, H361, and C363.

It belongs to the cytochrome P450 family. Heme serves as cofactor.

Its function is as follows. Can bind oleic-acid derivatives, amphotericin B like precursors and a variety of nitrogen ligand donors. This is Cytochrome P450 CYP105Q4 from Mycobacterium marinum (strain ATCC BAA-535 / M).